Consider the following 274-residue polypeptide: MALLSFERKYRVRGGTLIGGDLFDFWVGPYFVGFFGVSAIFFIFLGVSLIGYAASQGPTWDPFAISINPPDLKYGLGAAPLLEGGFWQAITVCALGAFISWMLREVEISRKLGIGWHVPLAFCVPIFMFCVLQVFRPLLLGSWGHAFPYGILSHLDWVNNFGYQYLNWHYNPGHMSSVSFLFVNAMALGLHGGLILSVANPGDGDKVKTAEHENQYFRDVVGYSIGALSIHRLGLFLASNIFLTGAFGTIASGPFWTRGWPEWWGWWLDIPFWS.

At 2–32 (ALLSFERKYRVRGGTLIGGDLFDFWVGPYFV) the chain is on the cytoplasmic side. The helical transmembrane segment at 33–53 (GFFGVSAIFFIFLGVSLIGYA) threads the bilayer. Over 54 to 83 (ASQGPTWDPFAISINPPDLKYGLGAAPLLE) the chain is Periplasmic. A helical transmembrane segment spans residues 84–111 (GGFWQAITVCALGAFISWMLREVEISRK). The Cytoplasmic portion of the chain corresponds to 112-115 (LGIG). The helical transmembrane segment at 116–139 (WHVPLAFCVPIFMFCVLQVFRPLL) threads the bilayer. The Periplasmic portion of the chain corresponds to 140–170 (LGSWGHAFPYGILSHLDWVNNFGYQYLNWHY). (7R,8Z)-bacteriochlorophyll b-binding residues include H154 and H174. The helical transmembrane segment at 171-198 (NPGHMSSVSFLFVNAMALGLHGGLILSV) threads the bilayer. H191 serves as a coordination point for Fe cation. The Cytoplasmic segment spans residues 199 to 225 (ANPGDGDKVKTAEHENQYFRDVVGYSI). F217 serves as a coordination point for a ubiquinone. Residues 226-249 (GALSIHRLGLFLASNIFLTGAFGT) traverse the membrane as a helical segment. Residue H231 coordinates Fe cation. Over 250–274 (IASGPFWTRGWPEWWGWWLDIPFWS) the chain is Periplasmic.

It belongs to the reaction center PufL/M/PsbA/D family. As to quaternary structure, reaction center is composed of four bacteriochlorophylls, two bacteriopheophytins, two ubiquinones, one iron, and three highly hydrophobic polypeptide chains (designated L, M, and H).

Its subcellular location is the cellular chromatophore membrane. In terms of biological role, the reaction center is a membrane-bound complex that mediates the initial photochemical event in the electron transfer process of photosynthesis. This is Reaction center protein L chain (pufL) from Blastochloris viridis (Rhodopseudomonas viridis).